The chain runs to 433 residues: Glutamate-1-semialdehyde 2,1-aminomutase (433 aa).

Lysine 267 bears the N6-(pyridoxal phosphate)lysine mark.

The protein belongs to the class-III pyridoxal-phosphate-dependent aminotransferase family. HemL subfamily. Homodimer. Pyridoxal 5'-phosphate is required as a cofactor.

The protein localises to the cytoplasm. The catalysed reaction is (S)-4-amino-5-oxopentanoate = 5-aminolevulinate. It functions in the pathway porphyrin-containing compound metabolism; protoporphyrin-IX biosynthesis; 5-aminolevulinate from L-glutamyl-tRNA(Glu): step 2/2. In Syntrophobacter fumaroxidans (strain DSM 10017 / MPOB), this protein is Glutamate-1-semialdehyde 2,1-aminomutase.